The primary structure comprises 250 residues: 2,3-bisphosphoglycerate-dependent phosphoglycerate mutase (250 aa).

Substrate-binding positions include 10–17 (RHGESQWN), 23–24 (TG), Arg-62, 89–92 (ERHY), Lys-100, 116–117 (RR), and 185–186 (GN). His-11 (tele-phosphohistidine intermediate) is an active-site residue. Residue Glu-89 is the Proton donor/acceptor of the active site.

This sequence belongs to the phosphoglycerate mutase family. BPG-dependent PGAM subfamily. As to quaternary structure, homodimer.

It carries out the reaction (2R)-2-phosphoglycerate = (2R)-3-phosphoglycerate. Its pathway is carbohydrate degradation; glycolysis; pyruvate from D-glyceraldehyde 3-phosphate: step 3/5. Catalyzes the interconversion of 2-phosphoglycerate and 3-phosphoglycerate. The polypeptide is 2,3-bisphosphoglycerate-dependent phosphoglycerate mutase (Serratia proteamaculans (strain 568)).